Consider the following 215-residue polypeptide: Adenylate kinase (215 aa).

10–15 (GAGKGT) is a binding site for ATP. The segment at 30–59 (STGDMLRAAIKAGTPLGLEAKKIIDEGGLV) is NMP. AMP-binding positions include Thr31, Arg36, 57–59 (GLV), 85–88 (GFPR), and Gln92. An LID region spans residues 122–159 (GRRVHLASGRTYHVTYNPPKVEGKDDVTGEDLIQRDDD). ATP-binding positions include Arg123 and 132–133 (TY). 2 residues coordinate AMP: Arg156 and Arg167. Gln200 lines the ATP pocket.

It belongs to the adenylate kinase family. Monomer.

It localises to the cytoplasm. It catalyses the reaction AMP + ATP = 2 ADP. The protein operates within purine metabolism; AMP biosynthesis via salvage pathway; AMP from ADP: step 1/1. Functionally, catalyzes the reversible transfer of the terminal phosphate group between ATP and AMP. Plays an important role in cellular energy homeostasis and in adenine nucleotide metabolism. The chain is Adenylate kinase from Neisseria meningitidis serogroup B (strain ATCC BAA-335 / MC58).